Consider the following 290-residue polypeptide: Picrinine-N-methytransferase TMT4 (290 aa).

Positions 71–80 (MLDVGCGIGG) are SAM motif I. The Vacuolar targeting signal signature appears at 133–139 (DGTFDVV). Residues 134–142 (GTFDVVFTI) form an SAM motif II region. The segment at 161-170 (VAAPGAAIVI) is SAM motif III.

The protein belongs to the class I-like SAM-binding methyltransferase superfamily. gTMT family. As to quaternary structure, homodimer.

The protein localises to the vacuole membrane. The catalysed reaction is picrinine + S-adenosyl-L-methionine = ervincine + S-adenosyl-L-homocysteine + H(+). It functions in the pathway alkaloid biosynthesis; vindoline biosynthesis. In terms of biological role, S-adenosyl-L-methionine-dependent N-methyltransferase involved in the biosynthesis of biologically active monoterpenoid indole alkaloids (MIAs) natural products including vindoline. Catalyzes the conversion of picrinine to N-methylpicrinine (ervincine). The protein is Picrinine-N-methytransferase TMT4 of Catharanthus roseus (Madagascar periwinkle).